We begin with the raw amino-acid sequence, 476 residues long: Aspartyl/glutamyl-tRNA(Asn/Gln) amidotransferase subunit B (476 aa).

This sequence belongs to the GatB/GatE family. GatB subfamily. As to quaternary structure, heterotrimer of A, B and C subunits.

The catalysed reaction is L-glutamyl-tRNA(Gln) + L-glutamine + ATP + H2O = L-glutaminyl-tRNA(Gln) + L-glutamate + ADP + phosphate + H(+). It catalyses the reaction L-aspartyl-tRNA(Asn) + L-glutamine + ATP + H2O = L-asparaginyl-tRNA(Asn) + L-glutamate + ADP + phosphate + 2 H(+). Its function is as follows. Allows the formation of correctly charged Asn-tRNA(Asn) or Gln-tRNA(Gln) through the transamidation of misacylated Asp-tRNA(Asn) or Glu-tRNA(Gln) in organisms which lack either or both of asparaginyl-tRNA or glutaminyl-tRNA synthetases. The reaction takes place in the presence of glutamine and ATP through an activated phospho-Asp-tRNA(Asn) or phospho-Glu-tRNA(Gln). The polypeptide is Aspartyl/glutamyl-tRNA(Asn/Gln) amidotransferase subunit B (Clostridium botulinum (strain Alaska E43 / Type E3)).